The primary structure comprises 121 residues: Flagellar protein FliT (121 aa).

The required for homodimerization stretch occupies residues 1-50 (MNHAPHLYFAWQQLVEKSQLMLRLATEEQWDELIASEMAYVNAVQEIAHL). The interval 60–98 (MQEQLRPMLRLILDNESKVKQLLQIRMDELAKLVGQSSV) is fliD binding.

The protein belongs to the FliT family. Homodimer. Interacts with FliD and FlhC.

Its subcellular location is the cytoplasm. The protein localises to the cytosol. In terms of biological role, dual-function protein that regulates the transcription of class 2 flagellar operons and that also acts as an export chaperone for the filament-capping protein FliD. As a transcriptional regulator, acts as an anti-FlhDC factor; it directly binds FlhC, thus inhibiting the binding of the FlhC/FlhD complex to class 2 promoters, resulting in decreased expression of class 2 flagellar operons. As a chaperone, effects FliD transition to the membrane by preventing its premature polymerization, and by directing it to the export apparatus. In Escherichia coli O157:H7, this protein is Flagellar protein FliT.